Reading from the N-terminus, the 119-residue chain is Urease subunit beta (119 aa).

Belongs to the urease beta subunit family. Heterotrimer of UreA (gamma), UreB (beta) and UreC (alpha) subunits. Three heterotrimers associate to form the active enzyme.

It is found in the cytoplasm. The catalysed reaction is urea + 2 H2O + H(+) = hydrogencarbonate + 2 NH4(+). Its pathway is nitrogen metabolism; urea degradation; CO(2) and NH(3) from urea (urease route): step 1/1. The protein is Urease subunit beta of Tolumonas auensis (strain DSM 9187 / NBRC 110442 / TA 4).